The chain runs to 90 residues: Probable Fe(2+)-trafficking protein (90 aa).

Belongs to the Fe(2+)-trafficking protein family.

In terms of biological role, could be a mediator in iron transactions between iron acquisition and iron-requiring processes, such as synthesis and/or repair of Fe-S clusters in biosynthetic enzymes. This chain is Probable Fe(2+)-trafficking protein, found in Herminiimonas arsenicoxydans.